Consider the following 133-residue polypeptide: Agouti-signaling protein (133 aa).

The N-terminal stretch at 1 to 22 is a signal peptide; sequence MDVIHLFLATLLVSLCFLTAYS. A compositionally biased stretch (basic and acidic residues) spans 26–36; it reads PEEKPKDDRSL. The interval 26-83 is disordered; it reads PEEKPKDDRSLRNNSSMNLLDSPSVSIMALNKKSKKISRKEAEKKKRSSKKKASMTKV. Polar residues predominate over residues 37 to 50; it reads RNNSSMNLLDSPSV. N-linked (GlcNAc...) asparagine glycosylation is found at Asn38 and Asn39. A compositionally biased stretch (basic residues) spans 70–79; it reads KKRSSKKKAS. Intrachain disulfides connect Cys94-Cys109, Cys101-Cys115, Cys108-Cys126, Cys112-Cys133, and Cys117-Cys124. One can recognise an Agouti domain in the interval 94-133; that stretch reads CVATRDSCKPPAPACCDPCASCQCRFFRSACSCRVLTRTC.

It is found in the secreted. Functionally, involved in the regulation of melanogenesis. The binding of ASP to MC1R precludes alpha-MSH initiated signaling and thus blocks production of cAMP, leading to a down-regulation of eumelanogenesis (brown/black pigment) and thus increasing synthesis of pheomelanin (yellow/red pigment). This chain is Agouti-signaling protein (ASIP), found in Equus caballus (Horse).